The sequence spans 181 residues: Oligoribonuclease (181 aa).

Residues 8–171 (LIWIDLEMTG…DDIRESVAEL (164 aa)) enclose the Exonuclease domain. The active site involves tyrosine 129.

This sequence belongs to the oligoribonuclease family.

The protein resides in the cytoplasm. Its function is as follows. 3'-to-5' exoribonuclease specific for small oligoribonucleotides. This Shigella flexneri protein is Oligoribonuclease.